The primary structure comprises 338 residues: Aspartate carbamoyltransferase catalytic subunit (338 aa).

Carbamoyl phosphate-binding residues include arginine 72 and threonine 73. L-aspartate is bound at residue lysine 100. Carbamoyl phosphate is bound by residues arginine 122, histidine 152, and glutamine 155. 2 residues coordinate L-aspartate: arginine 186 and arginine 243. Positions 284 and 285 each coordinate carbamoyl phosphate.

It belongs to the aspartate/ornithine carbamoyltransferase superfamily. ATCase family. Heterododecamer (2C3:3R2) of six catalytic PyrB chains organized as two trimers (C3), and six regulatory PyrI chains organized as three dimers (R2).

It catalyses the reaction carbamoyl phosphate + L-aspartate = N-carbamoyl-L-aspartate + phosphate + H(+). The protein operates within pyrimidine metabolism; UMP biosynthesis via de novo pathway; (S)-dihydroorotate from bicarbonate: step 2/3. In terms of biological role, catalyzes the condensation of carbamoyl phosphate and aspartate to form carbamoyl aspartate and inorganic phosphate, the committed step in the de novo pyrimidine nucleotide biosynthesis pathway. The polypeptide is Aspartate carbamoyltransferase catalytic subunit (Acinetobacter baumannii (strain AB307-0294)).